Reading from the N-terminus, the 357-residue chain is Chorismate synthase (357 aa).

An NADP(+)-binding site is contributed by Arg-46. Residues 123 to 125, 235 to 236, Gly-275, 290 to 294, and Arg-316 each bind FMN; these read RSS, NA, and KPTPS.

Belongs to the chorismate synthase family. Homotetramer. FMNH2 serves as cofactor.

The catalysed reaction is 5-O-(1-carboxyvinyl)-3-phosphoshikimate = chorismate + phosphate. It functions in the pathway metabolic intermediate biosynthesis; chorismate biosynthesis; chorismate from D-erythrose 4-phosphate and phosphoenolpyruvate: step 7/7. Catalyzes the anti-1,4-elimination of the C-3 phosphate and the C-6 proR hydrogen from 5-enolpyruvylshikimate-3-phosphate (EPSP) to yield chorismate, which is the branch point compound that serves as the starting substrate for the three terminal pathways of aromatic amino acid biosynthesis. This reaction introduces a second double bond into the aromatic ring system. This Sulfurovum sp. (strain NBC37-1) protein is Chorismate synthase.